The following is a 212-amino-acid chain: MTSIADIRTDYARASLDIADVDASPLRQFRRWFDEALKAEVAEVNAMTLATVDPHGQPSARIVLLKNLDERGFTFFTNYASHKGEELAANPRAALLFHWIGLERQVRVQGIVEKVSEAESDAYYHSRPLGSRLGAWASEQSSEVPDRATLEAREAEYRQRFGDAPPRPPHWGGYRLLPERLEFWQGRPSRLHDRLEYRKHADGSWTIVRLAP.

Residues 8–11 and lysine 66 contribute to the substrate site; that span reads RTDY. Residues 61-66, 76-77, lysine 83, and glutamine 105 each bind FMN; these read RIVLLK and FT. 3 residues coordinate substrate: tyrosine 123, arginine 127, and serine 131. Residues 140–141 and tryptophan 184 contribute to the FMN site; that span reads QS. Position 190–192 (190–192) interacts with substrate; that stretch reads RLH. An FMN-binding site is contributed by arginine 194.

Belongs to the pyridoxamine 5'-phosphate oxidase family. Homodimer. Requires FMN as cofactor.

It catalyses the reaction pyridoxamine 5'-phosphate + O2 + H2O = pyridoxal 5'-phosphate + H2O2 + NH4(+). The enzyme catalyses pyridoxine 5'-phosphate + O2 = pyridoxal 5'-phosphate + H2O2. It participates in cofactor metabolism; pyridoxal 5'-phosphate salvage; pyridoxal 5'-phosphate from pyridoxamine 5'-phosphate: step 1/1. Its pathway is cofactor metabolism; pyridoxal 5'-phosphate salvage; pyridoxal 5'-phosphate from pyridoxine 5'-phosphate: step 1/1. Functionally, catalyzes the oxidation of either pyridoxine 5'-phosphate (PNP) or pyridoxamine 5'-phosphate (PMP) into pyridoxal 5'-phosphate (PLP). This is Pyridoxine/pyridoxamine 5'-phosphate oxidase from Ralstonia pickettii (strain 12J).